The primary structure comprises 253 residues: tRNA (guanine-N(1)-)-methyltransferase (253 aa).

Residues Gly111 and 131–136 each bind S-adenosyl-L-methionine; that span reads LGDFVL.

This sequence belongs to the RNA methyltransferase TrmD family. Homodimer.

The protein localises to the cytoplasm. The enzyme catalyses guanosine(37) in tRNA + S-adenosyl-L-methionine = N(1)-methylguanosine(37) in tRNA + S-adenosyl-L-homocysteine + H(+). Functionally, specifically methylates guanosine-37 in various tRNAs. In Synechococcus sp. (strain JA-3-3Ab) (Cyanobacteria bacterium Yellowstone A-Prime), this protein is tRNA (guanine-N(1)-)-methyltransferase.